A 328-amino-acid chain; its full sequence is Eukaryotic translation initiation factor 3 subunit I (328 aa).

WD repeat units follow at residues 8 to 47 (GHER…RLGT), 50 to 91 (GHQG…GTIP), 148 to 187 (SIQT…ELNS), 190 to 229 (DHTG…CLKT), and 287 to 328 (GHFG…FVFE).

Belongs to the eIF-3 subunit I family. As to quaternary structure, component of the eukaryotic translation initiation factor 3 (eIF-3) complex.

Its subcellular location is the cytoplasm. Component of the eukaryotic translation initiation factor 3 (eIF-3) complex, which is involved in protein synthesis of a specialized repertoire of mRNAs and, together with other initiation factors, stimulates binding of mRNA and methionyl-tRNAi to the 40S ribosome. The eIF-3 complex specifically targets and initiates translation of a subset of mRNAs involved in cell proliferation. The sequence is that of Eukaryotic translation initiation factor 3 subunit I from Culex quinquefasciatus (Southern house mosquito).